Reading from the N-terminus, the 120-residue chain is NAD(P)H-quinone oxidoreductase subunit 3, chloroplastic (120 aa).

The next 3 helical transmembrane spans lie at phenylalanine 10 to leucine 30, methionine 64 to valine 84, and methionine 89 to valine 109.

This sequence belongs to the complex I subunit 3 family. NDH is composed of at least 16 different subunits, 5 of which are encoded in the nucleus.

The protein localises to the plastid. It is found in the chloroplast thylakoid membrane. The catalysed reaction is a plastoquinone + NADH + (n+1) H(+)(in) = a plastoquinol + NAD(+) + n H(+)(out). The enzyme catalyses a plastoquinone + NADPH + (n+1) H(+)(in) = a plastoquinol + NADP(+) + n H(+)(out). Its function is as follows. NDH shuttles electrons from NAD(P)H:plastoquinone, via FMN and iron-sulfur (Fe-S) centers, to quinones in the photosynthetic chain and possibly in a chloroplast respiratory chain. The immediate electron acceptor for the enzyme in this species is believed to be plastoquinone. Couples the redox reaction to proton translocation, and thus conserves the redox energy in a proton gradient. This is NAD(P)H-quinone oxidoreductase subunit 3, chloroplastic from Chlorokybus atmophyticus (Soil alga).